Here is a 498-residue protein sequence, read N- to C-terminus: Acetyl-coenzyme A carboxylase carboxyl transferase subunit beta, chloroplastic (498 aa).

The segment at 36 to 59 (SVNEDPIINDMDKDIPSGSDSDNS) is disordered. Positions 231-498 (LWVQCENCYG…FFPLNQNSIK (268 aa)) constitute a CoA carboxyltransferase N-terminal domain. Cys-235, Cys-238, Cys-254, and Cys-257 together coordinate Zn(2+). Residues 235-257 (CENCYGLNYKRFLKSKMNICEHC) form a C4-type zinc finger.

The protein belongs to the AccD/PCCB family. As to quaternary structure, acetyl-CoA carboxylase is a heterohexamer composed of biotin carboxyl carrier protein, biotin carboxylase and 2 subunits each of ACCase subunit alpha and ACCase plastid-coded subunit beta (accD). Zn(2+) serves as cofactor.

It is found in the plastid. The protein resides in the chloroplast stroma. It carries out the reaction N(6)-carboxybiotinyl-L-lysyl-[protein] + acetyl-CoA = N(6)-biotinyl-L-lysyl-[protein] + malonyl-CoA. The protein operates within lipid metabolism; malonyl-CoA biosynthesis; malonyl-CoA from acetyl-CoA: step 1/1. Functionally, component of the acetyl coenzyme A carboxylase (ACC) complex. Biotin carboxylase (BC) catalyzes the carboxylation of biotin on its carrier protein (BCCP) and then the CO(2) group is transferred by the transcarboxylase to acetyl-CoA to form malonyl-CoA. This is Acetyl-coenzyme A carboxylase carboxyl transferase subunit beta, chloroplastic from Morus indica (Mulberry).